The chain runs to 1398 residues: MAP-homologous protein 1 (1398 aa).

Met-1 is subject to N-acetylmethionine. The tract at residues 21-77 is disordered; that stretch reads GWLVRPSASTSKSSRPGKSESKANSVAPDIQMDTARPPVFETSVDSSSSILSSNDKG. Residues 27-36 are compositionally biased toward polar residues; that stretch reads SASTSKSSRP. Positions 63–73 are enriched in low complexity; it reads SVDSSSSILSS. Ser-81 carries the post-translational modification Phosphoserine. Disordered stretches follow at residues 90–144, 156–186, and 191–210; these read NQRA…APAP, HRKK…GAAI, and TATI…PPSY. 2 stretches are compositionally biased toward polar residues: residues 91 to 102 and 114 to 123; these read QRANAGSTSVPT and VVETNLSNVE. The segment covering 159–186 has biased composition (basic and acidic residues); the sequence is KDQEQQEKERERKERSPSPTHVDRGAAI. A Glycyl lysine isopeptide (Lys-Gly) (interchain with G-Cter in ubiquitin) cross-link involves residue Lys-221. A Phosphothreonine modification is found at Thr-222. Disordered stretches follow at residues 244 to 270, 296 to 382, 395 to 428, and 515 to 548; these read HSPE…PDPR, SSAS…PSSH, GNNN…SSME, and NPEE…NNSQ. Phosphoserine is present on residues Ser-309, Ser-311, Ser-354, and Ser-357. A compositionally biased stretch (low complexity) spans 357–371; it reads SIVDTVDSNSDVSSS. Over residues 372–381 the composition is skewed to polar residues; sequence AQNNNQTPSS. Positions 396–426 are enriched in low complexity; the sequence is NNNNNSTNASSLSANVNNPDTSSTSLWSSSS. A compositionally biased stretch (basic and acidic residues) spans 521–538; it reads ANAKSKEEMAPQKQNEVE. Residue Thr-577 is modified to Phosphothreonine. The span at 605-615 shows a compositional bias: low complexity; it reads STSSLASMVSS. Disordered stretches follow at residues 605-630, 1148-1169, and 1203-1223; these read STSS…EILP, LKSP…PNSE, and DAED…HEDV. Polar residues predominate over residues 1160–1169; the sequence is GGNQAQPNSE. A compositionally biased stretch (basic and acidic residues) spans 1208–1223; the sequence is VEFREGDDSNVNHEDV. The tract at residues 1227–1258 is tau/MAP repeat-like; sequence DQQFRDEVDIKNKYSIIKRELEHEKLVGGGDL. Positions 1313–1372 are disordered; that stretch reads QEETAFRTKDEQQSSQSNDSSANASPTTDPISTGSNTSRTNDNAHIPPTDAPGFDKFMNN. Residues 1325 to 1337 are compositionally biased toward low complexity; that stretch reads QSSQSNDSSANAS. Residues 1338-1355 show a composition bias toward polar residues; the sequence is PTTDPISTGSNTSRTNDN.

It localises to the cytoplasm. It is found in the cytoskeleton. The protein resides in the spindle. Functionally, essential for the formation and/or stabilization of microtubules. Binds to microtubules in vitro. The protein is MAP-homologous protein 1 (MHP1) of Saccharomyces cerevisiae (strain ATCC 204508 / S288c) (Baker's yeast).